A 96-amino-acid polypeptide reads, in one-letter code: MNKYYDLVKAPIITELTNKLIERQNKYTFKVAKTANKVEIKKALESIFQVKVLSVNTRNVLPQFKRKGKFEGYTSGYKKAICKLAPGQKIKILANE.

This sequence belongs to the universal ribosomal protein uL23 family. As to quaternary structure, part of the 50S ribosomal subunit. Contacts protein L29, and trigger factor when it is bound to the ribosome.

Functionally, one of the early assembly proteins it binds 23S rRNA. One of the proteins that surrounds the polypeptide exit tunnel on the outside of the ribosome. Forms the main docking site for trigger factor binding to the ribosome. The chain is Large ribosomal subunit protein uL23 from Aster yellows witches'-broom phytoplasma (strain AYWB).